The chain runs to 123 residues: Anti-lipopolysaccharide factor (123 aa).

Positions 1 to 26 are cleaved as a signal peptide; the sequence is MRKGVVAGLCLALVVMCLYLPQPCEA. Asn45 carries an N-linked (GlcNAc...) asparagine glycan. Residues Cys55 and Cys76 are joined by a disulfide bond.

As to expression, isoform 1 is highly expressed in muscle and stomach, moderately in heart and gill and at lower levels in hemocytes and hepatopancreas. Isoform 2 is mainly expressed in gill, hepatopancreas, muscle and eyestalk.

The protein resides in the secreted. Its function is as follows. May bind to bacterial LPS and thus specifically inhibit the LPS-mediated activation of the hemolymph coagulation. It has a strong antibacterial effect especially on the growth of Gram-negative bacteria. This Portunus trituberculatus (Swimming crab) protein is Anti-lipopolysaccharide factor.